The chain runs to 117 residues: Mediator of RNA polymerase II transcription subunit 11 (117 aa).

Ala2 carries the N-acetylalanine modification.

This sequence belongs to the Mediator complex subunit 11 family. As to quaternary structure, component of the Mediator complex, which is composed of MED1, MED4, MED6, MED7, MED8, MED9, MED10, MED11, MED12, MED13, MED13L, MED14, MED15, MED16, MED17, MED18, MED19, MED20, MED21, MED22, MED23, MED24, MED25, MED26, MED27, MED29, MED30, MED31, CCNC, CDK8 and CDC2L6/CDK11. The MED12, MED13, CCNC and CDK8 subunits form a distinct module termed the CDK8 module. Mediator containing the CDK8 module is less active than Mediator lacking this module in supporting transcriptional activation. Individual preparations of the Mediator complex lacking one or more distinct subunits have been variously termed ARC, CRSP, DRIP, PC2, SMCC and TRAP. As to expression, expressed in cochlea.

Its subcellular location is the nucleus. Functionally, component of the Mediator complex, a coactivator involved in the regulated transcription of nearly all RNA polymerase II-dependent genes. Mediator functions as a bridge to convey information from gene-specific regulatory proteins to the basal RNA polymerase II transcription machinery. Mediator is recruited to promoters by direct interactions with regulatory proteins and serves as a scaffold for the assembly of a functional pre-initiation complex with RNA polymerase II and the general transcription factors. In Mus musculus (Mouse), this protein is Mediator of RNA polymerase II transcription subunit 11 (Med11).